Consider the following 387-residue polypeptide: Gibberellic acid methyltransferase 2 (387 aa).

Tyr-33 lines the S-adenosyl-L-homocysteine pocket. Gln-40 is a binding site for gibberellin A4. Residues Cys-74, Asn-79, Asp-113, Leu-114, Ser-146, and Phe-147 each coordinate S-adenosyl-L-homocysteine. Positions 167 and 168 each coordinate gibberellin A4. The Mg(2+) site is built by Asn-185, Arg-275, Asp-276, Phe-278, and Asn-279.

This sequence belongs to the methyltransferase superfamily. Type-7 methyltransferase family. SABATH subfamily. Mg(2+) is required as a cofactor. In terms of tissue distribution, expressed in siliques and germinating seeds. Not detected in leaves, stems, flowers and roots.

It carries out the reaction gibberellin A4 + S-adenosyl-L-methionine = O-methyl gibberellin A4 + S-adenosyl-L-homocysteine. With respect to regulation, down-regulated by Zn(2+), Cu(2+) and Fe(3+). No effect of K(+), NH(4+), Na(+), Ca(2+), Mg(2+), Mn(2+) and Fe(2+). Its function is as follows. Methylates the carboxyl group of several gibberellins (GAs). Substrate preference is GA4 &gt; GA34 &gt; GA9 &gt; GA3 &gt; GA1 &gt; GA51 &gt; GA20. No activity with diterpenes abietic acid and ent-kaurenoic acid. The sequence is that of Gibberellic acid methyltransferase 2 (GAMT2) from Arabidopsis thaliana (Mouse-ear cress).